We begin with the raw amino-acid sequence, 92 residues long: Large ribosomal subunit protein uL23c (92 aa).

Belongs to the universal ribosomal protein uL23 family. As to quaternary structure, part of the 50S ribosomal subunit.

It is found in the plastid. The protein resides in the chloroplast. In terms of biological role, binds to 23S rRNA. The protein is Large ribosomal subunit protein uL23c (rpl23) of Mesostigma viride (Green alga).